Consider the following 151-residue polypeptide: Probable ubiquitin-conjugating enzyme E2 W-B (151 aa).

A UBC core domain is found at 3–151 (SMQKRLQKEL…TKWWYHDDTC (149 aa)). The active-site Glycyl thioester intermediate is C91.

This sequence belongs to the ubiquitin-conjugating enzyme family.

The protein resides in the nucleus. The catalysed reaction is S-ubiquitinyl-[E1 ubiquitin-activating enzyme]-L-cysteine + [E2 ubiquitin-conjugating enzyme]-L-cysteine = [E1 ubiquitin-activating enzyme]-L-cysteine + S-ubiquitinyl-[E2 ubiquitin-conjugating enzyme]-L-cysteine.. It catalyses the reaction S-ubiquitinyl-[E1 ubiquitin-activating enzyme]-L-cysteine + [acceptor protein]-N-terminal-amino acid = [E1 ubiquitin-activating enzyme]-L-cysteine + N-terminal-ubiquitinyl-[acceptor protein].. It functions in the pathway protein modification; protein ubiquitination. Accepts ubiquitin from the E1 complex and catalyzes its covalent attachment to other proteins. Catalyzes monoubiquitination. Involved in degradation of misfolded chaperone substrate and DNA repair. The chain is Probable ubiquitin-conjugating enzyme E2 W-B (ube2wb) from Danio rerio (Zebrafish).